Consider the following 797-residue polypeptide: Xaa-Pro dipeptidyl-peptidase (797 aa).

Catalysis depends on charge relay system residues Ser-370, Asp-490, and His-521.

Belongs to the peptidase S15 family. Homodimer.

It localises to the cytoplasm. It catalyses the reaction Hydrolyzes Xaa-Pro-|- bonds to release unblocked, N-terminal dipeptides from substrates including Ala-Pro-|-p-nitroanilide and (sequentially) Tyr-Pro-|-Phe-Pro-|-Gly-Pro-|-Ile.. Its function is as follows. Removes N-terminal dipeptides sequentially from polypeptides having unsubstituted N-termini provided that the penultimate residue is proline. In Lacticaseibacillus casei (strain BL23) (Lactobacillus casei), this protein is Xaa-Pro dipeptidyl-peptidase.